Here is a 1060-residue protein sequence, read N- to C-terminus: Bumetanide-sensitive sodium-(potassium)-chloride cotransporter (1060 aa).

The Cytoplasmic segment spans residues 1–122; sequence MNDENRFNVS…KSPTPAVGIK (122 aa). The next 2 helical transmembrane spans lie at 123–143 and 154–174; these read LGWIQGVFIPCLLNIWGVMLF and GIGLSLVIIAISAIVCVITTL. The Cytoplasmic segment spans residues 175 to 197; the sequence is SMSAICTNGEVKGGGIYYIISRS. 2 consecutive transmembrane segments (helical) span residues 198–218 and 250–270; these read LGPEFGASVGIIFAFANAVAA and IVGTVALLVMCIICAIGMDWE. At 271-275 the chain is on the cytoplasmic side; the sequence is SKAQN. Helical transmembrane passes span 276–296 and 332–352; these read FLIAIIVGAMVDFVVGTIMGP and FFSVFAIFFPSVTGIQAGANI. Residues 353-367 lie on the Cytoplasmic side of the membrane; that stretch reads SGDLKDPASAIPKGT. Residues 368–388 traverse the membrane as a helical segment; sequence LLALLISMVSYTLMVLFAGGG. N-linked (GlcNAc...) asparagine glycans are attached at residues Asn-396, Asn-404, and Asn-419. Residues 432-452 form a helical membrane-spanning segment; it reads VMQLMSAWGPFIYGGCWAATL. Residues 453-497 are Cytoplasmic-facing; the sequence is STALTNLLSVPRLIQALGVDRIYPGLIFFSKPYGRHGEPYRGYVL. Helical transmembrane passes span 498–518 and 563–583; these read TFFVSLLFLLIADLNTIAPLI and CVAIMLLVHWVMSLVTFAIFF. The Cytoplasmic portion of the chain corresponds to 584 to 642; that stretch reads TLYLIVHYRRPDVNWGSSTQAQMYKTALSSAHALARTGEHVKNYWPQLLVLAGRPQARP. The helical transmembrane segment at 643-663 threads the bilayer; that stretch reads ALVDLGNLISKAGSLMIVGDI. N-linked (GlcNAc...) asparagine glycosylation is present at Asn-816. Residues 882 to 902 form a helical membrane-spanning segment; the sequence is TLDVWWLYDDGGLTILLPYII. The Cytoplasmic segment spans residues 903–1060; the sequence is SQRSAWANCK…NHTSVLTFYS (158 aa).

This sequence belongs to the SLC12A transporter family.

Its subcellular location is the membrane. Its function is as follows. Electrically silent transporter system. Mediates sodium and chloride reabsorption. Plays a vital role in the regulation of ionic balance and cell volume. This Manduca sexta (Tobacco hawkmoth) protein is Bumetanide-sensitive sodium-(potassium)-chloride cotransporter.